The sequence spans 290 residues: 2-hydroxy-6-oxo-6-(2'-aminophenyl)hexa-2,4-dienoic acid hydrolase (290 aa).

Catalysis depends on residues Ser-114, Asp-233, and His-261.

Belongs to the DmpD/TodF/XylF esterase family. As to quaternary structure, homodimer.

It carries out the reaction (2E,4E)-6-(2-aminophenyl)-2-hydroxy-6-oxohexa-2,4-dienoate + H2O = (2E)-2-hydroxypenta-2,4-dienoate + anthranilate + H(+). The protein operates within xenobiotic degradation; carbazole degradation. Its function is as follows. Involved in the degradation of carbazole, a toxic N-heterocyclic aromatic compound containing dibenzopyrrole system. Catalyzes the hydrolytic cleavage of a carbon-carbon bond of 2-hydroxy-6-oxo-6-(2'-aminophenyl)hexa-2,4-dienoic acid (HOPDA) to yield anthranilate. CarC is specific for 2-hydroxy-6-oxo-6-phenylhexa-2,4-dienoic acid (6-phenyl-HODA), and has little activity toward 2-hydroxy-6-oxohepta-2,4-dienoic acid and 2-hydroxymuconic semialdehyde. The effect of the presence of an amino group or hydroxyl group at the 2'-position of phenyl moiety of 6-phenyl-HODA on the enzyme activity is found to be small. This Metapseudomonas resinovorans (Pseudomonas resinovorans) protein is 2-hydroxy-6-oxo-6-(2'-aminophenyl)hexa-2,4-dienoic acid hydrolase (carC).